Here is a 34-residue protein sequence, read N- to C-terminus: SXPLPLIVNTWPFKXATTIGMVVIHLKGYTAAGT.

Threonine 18 acts as the Nucleophile in catalysis.

It belongs to the Ntn-hydrolase family. Heterotetramer of two alpha and two beta chains arranged as a dimer of alpha/beta heterodimers. In terms of processing, cleaved into an alpha and beta chain by autocatalysis; this activates the enzyme. The N-terminal residue of the beta subunit is responsible for the nucleophile hydrolase activity. N-glycosylated.

It is found in the lysosome. The enzyme catalyses N(4)-(beta-N-acetyl-D-glucosaminyl)-L-asparagine + H2O = N-acetyl-beta-D-glucosaminylamine + L-aspartate + H(+). Cleaves the GlcNAc-Asn bond which joins oligosaccharides to the peptide of asparagine-linked glycoproteins. The chain is N(4)-(Beta-N-acetylglucosaminyl)-L-asparaginase (AGA) from Sus scrofa (Pig).